The sequence spans 94 residues: MSCEVLRKLEEVIRRRIEEKNPESYTYRLYSSGMHNVARKVGEEAVEVAVAALAEGKGRVVEEAADLLYHLLVLLNSTGLSLADVCAELEKRMR.

This sequence belongs to the PRA-PH family.

The protein localises to the cytoplasm. The enzyme catalyses 1-(5-phospho-beta-D-ribosyl)-ATP + H2O = 1-(5-phospho-beta-D-ribosyl)-5'-AMP + diphosphate + H(+). It participates in amino-acid biosynthesis; L-histidine biosynthesis; L-histidine from 5-phospho-alpha-D-ribose 1-diphosphate: step 2/9. This is Phosphoribosyl-ATP pyrophosphatase from Pyrobaculum neutrophilum (strain DSM 2338 / JCM 9278 / NBRC 100436 / V24Sta) (Thermoproteus neutrophilus).